Reading from the N-terminus, the 122-residue chain is uncharacterized protein (122 aa).

The span at methionine 1 to arginine 15 shows a compositional bias: basic and acidic residues. A disordered region spans residues methionine 1 to serine 49. Positions leucine 16–proline 32 are enriched in low complexity.

This is an uncharacterized protein from Homo sapiens (Human).